The primary structure comprises 484 residues: Hemogen (484 aa).

A compositionally biased stretch (basic and acidic residues) spans 1-25; sequence MDLGKDQSHLKHHQTPDPHQEENHS. 2 disordered regions span residues 1–32 and 44–91; these read MDLGKDQSHLKHHQTPDPHQEENHSPEVIGTW and KAEV…PQPQ. The segment at 7 to 87 is necessary for nuclear localization; it reads QSHLKHHQTP…RQQNTELKVE (81 aa). Residues 61–79 are compositionally biased toward basic residues; that stretch reads KKRKQQRTGKGNRRGRKRQ. A phosphoserine mark is found at S123, S159, S181, S188, and S201. Residue T246 is modified to Phosphothreonine. 3 disordered regions span residues 265-290, 306-369, and 386-471; these read DVPKGYILDTDQNPAEPEEYNETDQG, EPKD…YSPE, and QETS…ILNE. Residues 306-320 are compositionally biased toward basic and acidic residues; that stretch reads EPKDLSTKTHQESAE. Phosphoserine occurs at positions 349 and 353. T360 is subject to Phosphothreonine. Phosphoserine is present on residues S363 and S367. 3 stretches are compositionally biased toward basic and acidic residues: residues 413-428, 438-447, and 454-463; these read YKNKDVPKECFPEPHQ, PKAHQEDAKD, and EMKEKPKEEP.

As to expression, expressed in hematopoietic precursor cells, thyroid and spermatids (at protein level). Expressed in bone marrow, testis, thymus. Expressed in prostate cancer and ovarian cancer. Also expressed in thymus and thyroid tumors, non-Hodgkin lymphoma, various leukemia cell lines, peripheral blood mononuclear cells (PBMCs) and bone marrow mononuclear cells (BMMCs) of patients with leukemia.

It is found in the nucleus. Its function is as follows. Regulates the proliferation and differentiation of hematopoietic cells. Overexpression block the TPA-induced megakaryocytic differentiation in the K562 cell model. May also prevent cell apoptosis through the activation of the nuclear factor-kappa B (NF-kB). This Homo sapiens (Human) protein is Hemogen (HEMGN).